The following is a 591-amino-acid chain: PDZ and LIM domain protein 5 (591 aa).

Ser-2 carries the N-acetylserine modification. At Ser-2 the chain carries Phosphoserine. The 84-residue stretch at 2–85 folds into the PDZ domain; the sequence is SNYSVSLVGP…SLNMTLQRAS (84 aa). An N6-acetyllysine; alternate modification is found at Lys-89. The residue at position 89 (Lys-89) is an N6-succinyllysine; alternate. A Glycyl lysine isopeptide (Lys-Gly) (interchain with G-Cter in SUMO2); alternate cross-link involves residue Lys-89. A phosphoserine mark is found at Glu-102, Lys-105, Ser-111, Ser-134, and Ser-137. Disordered regions lie at residues 121 to 166 and 186 to 398; these read TNMA…PTPV and SADQ…DQDT. The span at 134-143 shows a compositional bias: polar residues; sequence SVSSPKVTSI. Low complexity predominate over residues 144–166; it reads PSPSSAFTPAHAATSSHASPTPV. 2 stretches are compositionally biased toward polar residues: residues 186 to 195 and 205 to 217; these read SADQCSSPPN and RQPT…SESA. Phosphoserine is present on residues Gln-218, Ser-228, and Ser-260. Composition is skewed to basic and acidic residues over residues 258-273 and 294-304; these read DASK…DWRP and HLTESENDNTK. The span at 310–339 shows a compositional bias: low complexity; it reads QEPSQQPASSGASPLSASEGPESPGSSRPS. Residues Ser-313, Pro-316, and Ser-322 each carry the phosphoserine modification. N6-acetyllysine is present on Lys-350. Over residues 353-385 the composition is skewed to polar residues; it reads GSTSVKSPSWQRPNQAAPSTGRISNNARSSGTG. Residues Ser-359 and Ser-361 each carry the phosphoserine modification. LIM zinc-binding domains follow at residues 413-472, 472-531, and 531-591; these read PMCA…FFAP, PECG…LFGT, and TICR…SVNF.

As to quaternary structure, interacts with various PKC isoforms through the LIM domains. Interacts with actin and alpha-actinin through the PDZ domain. Interacts (via LIM domains) with SIPA1L1/SPAR; this interaction may occur preferentially with isoform 1.

It is found in the postsynaptic density. The protein resides in the presynapse. Its subcellular location is the postsynapse. The protein localises to the cytoplasm. It localises to the cytosol. May play an important role in the heart development by scaffolding PKC to the Z-disk region. May play a role in the regulation of cardiomyocyte expansion. Isoforms lacking the LIM domains may negatively modulate the scaffolding activity of isoform 1. Overexpression promotes the development of heart hypertrophy. Contributes to the regulation of dendritic spine morphogenesis in neurons. May be required to restrain postsynaptic growth of excitatory synapses. Isoform 1, but not isoform 2, expression favors spine thinning and elongation. The protein is PDZ and LIM domain protein 5 of Mus musculus (Mouse).